Here is a 343-residue protein sequence, read N- to C-terminus: Anthranilate phosphoribosyltransferase (343 aa).

Residues Gly84, Gly87–Asp88, Thr92, Asn94–Thr97, Lys112–Ser120, and Ser124 contribute to the 5-phospho-alpha-D-ribose 1-diphosphate site. Gly84 is an anthranilate binding site. Residue Ser96 participates in Mg(2+) binding. Asn115 contacts anthranilate. Arg170 contributes to the anthranilate binding site. Mg(2+)-binding residues include Asp229 and Glu230.

Belongs to the anthranilate phosphoribosyltransferase family. As to quaternary structure, homodimer. It depends on Mg(2+) as a cofactor.

The catalysed reaction is N-(5-phospho-beta-D-ribosyl)anthranilate + diphosphate = 5-phospho-alpha-D-ribose 1-diphosphate + anthranilate. Its pathway is amino-acid biosynthesis; L-tryptophan biosynthesis; L-tryptophan from chorismate: step 2/5. Functionally, catalyzes the transfer of the phosphoribosyl group of 5-phosphorylribose-1-pyrophosphate (PRPP) to anthranilate to yield N-(5'-phosphoribosyl)-anthranilate (PRA). This is Anthranilate phosphoribosyltransferase from Burkholderia orbicola (strain MC0-3).